The chain runs to 556 residues: Arginine--tRNA ligase (556 aa).

A 'HIGH' region motif is present at residues 132–142 (ANPTGDLHLGH).

This sequence belongs to the class-I aminoacyl-tRNA synthetase family. Monomer.

The protein localises to the cytoplasm. The enzyme catalyses tRNA(Arg) + L-arginine + ATP = L-arginyl-tRNA(Arg) + AMP + diphosphate. This Listeria monocytogenes serotype 4b (strain CLIP80459) protein is Arginine--tRNA ligase.